The primary structure comprises 100 residues: Small ribosomal subunit protein uS14c (100 aa).

The protein belongs to the universal ribosomal protein uS14 family. Part of the 30S ribosomal subunit.

Its subcellular location is the plastid. The protein localises to the chloroplast. Its function is as follows. Binds 16S rRNA, required for the assembly of 30S particles. The chain is Small ribosomal subunit protein uS14c from Huperzia lucidula (Shining clubmoss).